Consider the following 461-residue polypeptide: MANHKLWGGRFEASLEGWVEEFGASIGFDYRLAPYDLEGSLAHVKMLGQTGIIAPEEAAAIQAGLEKLLARYESGELEFDVRNEDIHMNMEALLTEKIGPVAGKLHTARSRNDQVATDMHLYLKDQLGQIADKLLNLRQVLLDLAEEHVETIMPGYTHLQHAQPISFAHHLLAYYQMFSRDSQRFAFNLEHTDLSPLGAAALAGTTFPIDRELTADLLGFKGIYHNSLDAVSDRDFILEFLSNSSILIMHLSRLCEELINWCSYEYGFVSLSDTFSTGSSIMPQKKNPDMAELIRGKSGRVYGHLFSLLTVMKSLPLAYNKDLQEDKEGMFDTVDTIQKSLDIMAGILSSMTVNKEKMLVSTQQDFSNATELADYLAKKGLPFREAHEIVGKLVLECSKAGYYLQDIPLSRYQEVSSLIEEDVYQALESQTAVQKRNSLGGTGFEQIRQELERAKKDLNNK.

Belongs to the lyase 1 family. Argininosuccinate lyase subfamily.

The protein resides in the cytoplasm. It catalyses the reaction 2-(N(omega)-L-arginino)succinate = fumarate + L-arginine. It functions in the pathway amino-acid biosynthesis; L-arginine biosynthesis; L-arginine from L-ornithine and carbamoyl phosphate: step 3/3. This Streptococcus gordonii (strain Challis / ATCC 35105 / BCRC 15272 / CH1 / DL1 / V288) protein is Argininosuccinate lyase.